The following is a 216-amino-acid chain: Adenylate kinase (216 aa).

Position 10–15 (10–15) interacts with ATP; the sequence is GAGKGT. The interval 30–59 is NMP; sequence STGDIFRKNISENTPLGIEAKSYMDNGQLV. AMP-binding positions include T31, R36, 57 to 59, 85 to 88, and Q92; these read QLV and GFPR. The LID stretch occupies residues 126–163; sequence GRRVCPSCGASYHIKFNPPTNDGKCDLCGSDVIQRKDD. ATP is bound at residue R127. 2 residues coordinate Zn(2+): C130 and C133. Position 136–137 (136–137) interacts with ATP; it reads SY. 2 residues coordinate Zn(2+): C150 and C153. The AMP site is built by R160 and R171. Q199 lines the ATP pocket.

Belongs to the adenylate kinase family. In terms of assembly, monomer.

It localises to the cytoplasm. The catalysed reaction is AMP + ATP = 2 ADP. Its pathway is purine metabolism; AMP biosynthesis via salvage pathway; AMP from ADP: step 1/1. Its function is as follows. Catalyzes the reversible transfer of the terminal phosphate group between ATP and AMP. Plays an important role in cellular energy homeostasis and in adenine nucleotide metabolism. This chain is Adenylate kinase, found in Clostridium perfringens (strain ATCC 13124 / DSM 756 / JCM 1290 / NCIMB 6125 / NCTC 8237 / Type A).